We begin with the raw amino-acid sequence, 226 residues long: uncharacterized protein (226 aa).

A helical transmembrane segment spans residues 121–141 (YLIGNIIGLPLTIPFILIPLI).

The protein to yeast YDL183c.

It localises to the membrane. This is an uncharacterized protein from Schizosaccharomyces pombe (strain 972 / ATCC 24843) (Fission yeast).